A 366-amino-acid chain; its full sequence is Neutral protease 2 homolog MGYG_04094 (366 aa).

An N-terminal signal peptide occupies residues M1–A19. A propeptide spanning residues A20–R188 is cleaved from the precursor. 2 disulfide bridges follow: C196/C267 and C274/C292. A Zn(2+)-binding site is contributed by H317. The active site involves E318. Residues H321 and D332 each coordinate Zn(2+).

This sequence belongs to the peptidase M35 family. Zn(2+) is required as a cofactor.

It localises to the secreted. It carries out the reaction Preferential cleavage of bonds with hydrophobic residues in P1'. Also 3-Asn-|-Gln-4 and 8-Gly-|-Ser-9 bonds in insulin B chain.. Secreted metalloproteinase that allows assimilation of proteinaceous substrates. Shows high activities on basic nuclear substrates such as histone and protamine. May be involved in virulence. This chain is Neutral protease 2 homolog MGYG_04094, found in Arthroderma gypseum (strain ATCC MYA-4604 / CBS 118893) (Microsporum gypseum).